Here is a 284-residue protein sequence, read N- to C-terminus: Bifunctional protein FolD (284 aa).

Residues 165-167 (GRS) and S190 each bind NADP(+).

It belongs to the tetrahydrofolate dehydrogenase/cyclohydrolase family. As to quaternary structure, homodimer.

It catalyses the reaction (6R)-5,10-methylene-5,6,7,8-tetrahydrofolate + NADP(+) = (6R)-5,10-methenyltetrahydrofolate + NADPH. It carries out the reaction (6R)-5,10-methenyltetrahydrofolate + H2O = (6R)-10-formyltetrahydrofolate + H(+). It participates in one-carbon metabolism; tetrahydrofolate interconversion. Functionally, catalyzes the oxidation of 5,10-methylenetetrahydrofolate to 5,10-methenyltetrahydrofolate and then the hydrolysis of 5,10-methenyltetrahydrofolate to 10-formyltetrahydrofolate. This Streptococcus mutans serotype c (strain ATCC 700610 / UA159) protein is Bifunctional protein FolD.